The primary structure comprises 275 residues: AA9 family lytic polysaccharide monooxygenase AA9-X282 (275 aa).

A signal peptide spans 1-17 (MFTKLIIAASLAASVAA). H18 provides a ligand contact to Cu(2+). The residue at position 20 (T20) is a Phosphothreonine. A phosphoserine mark is found at S43 and S49. A Phosphothreonine modification is found at T50. Residue S58 is modified to Phosphoserine. A disulfide bond links C66 and C185. H96 contributes to the Cu(2+) binding site. S130 carries the post-translational modification Phosphoserine. 2 residues coordinate O2: H171 and Q180. Y182 lines the Cu(2+) pocket. The segment at 236–265 (TSPAVANTPYPTTATWNTALQPSTVPTAVP) is X282 extension. A 9res motif motif is present at residues 268–275 (GTPGIGKA).

It belongs to the polysaccharide monooxygenase AA9 family. Cu(2+) serves as cofactor.

Its subcellular location is the secreted. It carries out the reaction [(1-&gt;4)-beta-D-glucosyl]n+m + reduced acceptor + O2 = 4-dehydro-beta-D-glucosyl-[(1-&gt;4)-beta-D-glucosyl]n-1 + [(1-&gt;4)-beta-D-glucosyl]m + acceptor + H2O.. Its function is as follows. Lytic polysaccharide monooxygenase (LPMO) that depolymerizes crystalline and amorphous polysaccharides via the oxidation of scissile alpha- or beta-(1-4)-glycosidic bonds, yielding C1 oxidation products. Catalysis by LPMOs requires the reduction of the active-site copper from Cu(II) to Cu(I) by a reducing agent and H(2)O(2) or O(2) as a cosubstrate. Shows only weak binding properties to cellulose, and low cellulolytic oxidative activity which questions the involvement of X282 extension-containing AA9 proteins in the degradation of plant cell wall and opens new avenues as to the divergence of function of some AA9 members. The sequence is that of AA9 family lytic polysaccharide monooxygenase AA9-X282 from Trametes coccinea (strain BRFM310) (Pycnoporus coccineus).